We begin with the raw amino-acid sequence, 263 residues long: Proenkephalin-A (263 aa).

An N-terminal signal peptide occupies residues 1–24 (MARFLGLCTWLLALGPGLLATVRA). 3 disulfide bridges follow: C26–C48, C30–C52, and C33–C65. 2 propeptides span residues 192–203 (SPHLEDETKELQ) and 213–223 (VGRPEWWMDYQ). Position 247 is a phosphoserine (S247).

Belongs to the opioid neuropeptide precursor family. Post-translationally, proenkephalin-A is cleaved by CTSL to generate Met-enkephalin. Processed and degraded by ACE. In terms of processing, probably cleaved by ACE. Post-translationally, processed by ACE to generate Met-enkephalin in the nucleus accumbens of the brain. The N-terminal domain contains 6 conserved cysteines thought to be involved in disulfide bonding and/or processing. As to expression, secreted by neuroendocrine chromaffin cells through cromaffin granules.

It is found in the cytoplasmic vesicle. It localises to the secretory vesicle. The protein localises to the chromaffin granule lumen. The protein resides in the secreted. In terms of biological role, neuropeptide that competes with and mimic the effects of opiate drugs. They play a role in a number of physiologic functions, including pain perception and responses to stress. Its function is as follows. Met-enkephalin-Arg-Phe neuropeptide acts as a strong ligand of Mu-type opioid receptor OPRM1. Met-enkephalin-Arg-Phe-binding to OPRM1 in the nucleus accumbens of the brain increases activation of OPRM1, leading to long-term synaptic depression of glutamate release. Increases glutamate release in the striatum and decreases GABA concentration in the striatum. Functionally, increases glutamate release in the striatum. In terms of biological role, enkelytin possesses antibacterial activity against Gram-positive bacteria such as Micrococcus luteus and Bacillus megaterium. The protein is Proenkephalin-A (PENK) of Bos taurus (Bovine).